A 224-amino-acid polypeptide reads, in one-letter code: UPF0758 protein VP0184 (224 aa).

An MPN domain is found at 102–224 (ALTSPEQTKL…SVSFAERGWI (123 aa)). Positions 173, 175, and 186 each coordinate Zn(2+). The JAMM motif motif lies at 173–186 (HNHPSGVAEPSQAD).

Belongs to the UPF0758 family.

The chain is UPF0758 protein VP0184 from Vibrio parahaemolyticus serotype O3:K6 (strain RIMD 2210633).